Consider the following 545-residue polypeptide: Glucose-6-phosphate isomerase (545 aa).

Glu-351 (proton donor) is an active-site residue. Residues His-382 and Lys-510 contribute to the active site.

Belongs to the GPI family.

It localises to the cytoplasm. The catalysed reaction is alpha-D-glucose 6-phosphate = beta-D-fructose 6-phosphate. Its pathway is carbohydrate biosynthesis; gluconeogenesis. It participates in carbohydrate degradation; glycolysis; D-glyceraldehyde 3-phosphate and glycerone phosphate from D-glucose: step 2/4. In terms of biological role, catalyzes the reversible isomerization of glucose-6-phosphate to fructose-6-phosphate. The protein is Glucose-6-phosphate isomerase of Shewanella sp. (strain MR-4).